Here is a 1489-residue protein sequence, read N- to C-terminus: DNA-directed RNA polymerase subunit beta (1489 aa).

This sequence belongs to the RNA polymerase beta chain family. As to quaternary structure, the RNAP catalytic core consists of 2 alpha, 1 beta, 1 beta' and 1 omega subunit. When a sigma factor is associated with the core the holoenzyme is formed, which can initiate transcription.

The catalysed reaction is RNA(n) + a ribonucleoside 5'-triphosphate = RNA(n+1) + diphosphate. DNA-dependent RNA polymerase catalyzes the transcription of DNA into RNA using the four ribonucleoside triphosphates as substrates. The chain is DNA-directed RNA polymerase subunit beta from Koribacter versatilis (strain Ellin345).